The chain runs to 357 residues: Putative lipopolysaccharide heptosyltransferase 4 (357 aa).

It carries out the reaction alpha-D-Glc-(1-&gt;2)-alpha-D-Glc-(1-&gt;3)-[alpha-D-Gal-(1-&gt;6)]-alpha-D-Glc-(1-&gt;3)-[L-alpha-D-Hep-(1-&gt;7)]-4-O-PO3(2-)-L-alpha-D-Hep-(1-&gt;3)-4-O-PO3(2-)-L-alpha-D-Hep-(1-&gt;5)-[alpha-Kdo-(2-&gt;4)]-alpha-Kdo-(2-&gt;6)-lipid A + ADP-L-glycero-beta-D-manno-heptose = lipid A-core + ADP + H(+). It functions in the pathway bacterial outer membrane biogenesis; LPS core biosynthesis. Its function is as follows. Transferase involved in the biosynthesis of the core oligosaccharide region of lipopolysaccharide (LPS). May catalyze the addition of the terminal heptose (heptose IV) to the outer-core glucose III, the last step of the lipid A-core oligosaccharide biosynthesis. The polypeptide is Putative lipopolysaccharide heptosyltransferase 4 (Escherichia coli (strain K12)).